A 273-amino-acid polypeptide reads, in one-letter code: Thiazole synthase (273 aa).

The active-site Schiff-base intermediate with DXP is lysine 111. 1-deoxy-D-xylulose 5-phosphate-binding positions include glycine 172, 198-199, and 220-221; these read AG and NS. Residues 251–273 are disordered; that stretch reads RLPRRGQASASSPTTGLISGKDK. Over residues 258–267 the composition is skewed to polar residues; the sequence is ASASSPTTGL.

This sequence belongs to the ThiG family. As to quaternary structure, homotetramer. Forms heterodimers with either ThiH or ThiS.

The protein resides in the cytoplasm. It catalyses the reaction [ThiS sulfur-carrier protein]-C-terminal-Gly-aminoethanethioate + 2-iminoacetate + 1-deoxy-D-xylulose 5-phosphate = [ThiS sulfur-carrier protein]-C-terminal Gly-Gly + 2-[(2R,5Z)-2-carboxy-4-methylthiazol-5(2H)-ylidene]ethyl phosphate + 2 H2O + H(+). It functions in the pathway cofactor biosynthesis; thiamine diphosphate biosynthesis. Its function is as follows. Catalyzes the rearrangement of 1-deoxy-D-xylulose 5-phosphate (DXP) to produce the thiazole phosphate moiety of thiamine. Sulfur is provided by the thiocarboxylate moiety of the carrier protein ThiS. In vitro, sulfur can be provided by H(2)S. This Synechococcus sp. (strain CC9902) protein is Thiazole synthase.